Consider the following 333-residue polypeptide: Ribosomal RNA large subunit methyltransferase F (333 aa).

Positions 1-10 (MPQPPKRPRK) are enriched in basic residues. The disordered stretch occupies residues 1-31 (MPQPPKRPRKPAPAAVKTAPAKGELHPRNRH). Residues 12 to 22 (APAAVKTAPAK) are compositionally biased toward low complexity.

It belongs to the methyltransferase superfamily. METTL16/RlmF family.

The protein localises to the cytoplasm. The catalysed reaction is adenosine(1618) in 23S rRNA + S-adenosyl-L-methionine = N(6)-methyladenosine(1618) in 23S rRNA + S-adenosyl-L-homocysteine + H(+). Its function is as follows. Specifically methylates the adenine in position 1618 of 23S rRNA. This Ectopseudomonas mendocina (strain ymp) (Pseudomonas mendocina) protein is Ribosomal RNA large subunit methyltransferase F.